Reading from the N-terminus, the 534-residue chain is Peptide chain release factor 3 (534 aa).

In terms of domain architecture, tr-type G spans 9–278 (SRRRTFAIIS…FFVEHAPPPQ (270 aa)). Residues 18 to 25 (SHPDAGKT), 86 to 90 (DTPGH), and 140 to 143 (NKLD) contribute to the GTP site.

This sequence belongs to the TRAFAC class translation factor GTPase superfamily. Classic translation factor GTPase family. PrfC subfamily.

The protein localises to the cytoplasm. In terms of biological role, increases the formation of ribosomal termination complexes and stimulates activities of RF-1 and RF-2. It binds guanine nucleotides and has strong preference for UGA stop codons. It may interact directly with the ribosome. The stimulation of RF-1 and RF-2 is significantly reduced by GTP and GDP, but not by GMP. The sequence is that of Peptide chain release factor 3 from Stenotrophomonas maltophilia (strain R551-3).